The primary structure comprises 489 residues: Glycogen synthase (489 aa).

An ADP-alpha-D-glucose-binding site is contributed by Lys15.

Belongs to the glycosyltransferase 1 family. Bacterial/plant glycogen synthase subfamily.

The catalysed reaction is [(1-&gt;4)-alpha-D-glucosyl](n) + ADP-alpha-D-glucose = [(1-&gt;4)-alpha-D-glucosyl](n+1) + ADP + H(+). It participates in glycan biosynthesis; glycogen biosynthesis. Synthesizes alpha-1,4-glucan chains using ADP-glucose. The sequence is that of Glycogen synthase from Francisella tularensis subsp. holarctica (strain FTNF002-00 / FTA).